The sequence spans 465 residues: Ribosome biogenesis protein YTM1 (465 aa).

Residues 18–99 form a ubiquitin-like (UBL) domain region; that stretch reads ARLRFSTRDE…ETTLDVEYVR (82 aa). WD repeat units follow at residues 111–153, 160–198, 205–242, 277–317, 319–358, 364–404, and 427–465; these read LHDD…IHTS, GHQS…KGIT, GHKG…SPAV, GHTA…LVDT, TTSH…TTVS, GHTN…TDTD, and GDGV…PKTA. Residues 235-272 form a disordered region; the sequence is KKSESPAVPQNLLPSSSARSSKRRKLNSSASTSQRGPL.

Belongs to the WD repeat WDR12/YTM1 family. As to quaternary structure, component of the NOP7 complex, composed of ERB1, NOP7 and YTM1. The complex is held together by ERB1, which interacts with NOP7 via its N-terminal domain and with YTM1 via a high-affinity interaction between the seven-bladed beta-propeller domains of the 2 proteins. The NOP7 complex associates with the 66S pre-ribosome. Interacts (via UBL domain) with MDN1 (via VWFA/MIDAS domain).

The protein resides in the nucleus. Its subcellular location is the nucleolus. The protein localises to the nucleoplasm. Functionally, component of the NOP7 complex, which is required for maturation of the 25S and 5.8S ribosomal RNAs and formation of the 60S ribosome. The protein is Ribosome biogenesis protein YTM1 of Coccidioides immitis (strain RS) (Valley fever fungus).